The primary structure comprises 480 residues: tRNA-2-methylthio-N(6)-dimethylallyladenosine synthase (480 aa).

The 117-residue stretch at 2–118 (NRVHIKTYGC…VPGYLDNLRA (117 aa)) folds into the MTTase N-terminal domain. [4Fe-4S] cluster-binding residues include Cys11, Cys47, and Cys81. Positions 145 to 169 (DHLLPQDSDSDSQPSTLNSQLRGAA) are disordered. Low complexity predominate over residues 149–159 (PQDSDSDSQPS). Residues 171 to 405 (PPPQITAFVS…LELLRQNSER (235 aa)) enclose the Radical SAM core domain. [4Fe-4S] cluster contacts are provided by Cys185, Cys189, and Cys192. Residues 408 to 470 (ALLLDTVEEV…VSTLYGELML (63 aa)) form the TRAM domain.

It belongs to the methylthiotransferase family. MiaB subfamily. In terms of assembly, monomer. The cofactor is [4Fe-4S] cluster.

The protein resides in the cytoplasm. It carries out the reaction N(6)-dimethylallyladenosine(37) in tRNA + (sulfur carrier)-SH + AH2 + 2 S-adenosyl-L-methionine = 2-methylsulfanyl-N(6)-dimethylallyladenosine(37) in tRNA + (sulfur carrier)-H + 5'-deoxyadenosine + L-methionine + A + S-adenosyl-L-homocysteine + 2 H(+). Functionally, catalyzes the methylthiolation of N6-(dimethylallyl)adenosine (i(6)A), leading to the formation of 2-methylthio-N6-(dimethylallyl)adenosine (ms(2)i(6)A) at position 37 in tRNAs that read codons beginning with uridine. The chain is tRNA-2-methylthio-N(6)-dimethylallyladenosine synthase from Opitutus terrae (strain DSM 11246 / JCM 15787 / PB90-1).